Reading from the N-terminus, the 669-residue chain is UvrABC system protein B (669 aa).

Residues 26-414 (TNFHAGIAKQ…AGEVIELLVR (389 aa)) form the Helicase ATP-binding domain. 39-46 (GVTGSGKT) provides a ligand contact to ATP. A Beta-hairpin motif is present at residues 92–115 (YYDYYQPEAYVPASDTFIEKDSSI). Positions 435–597 (LISQINVCIK…SVVRPISDIL (163 aa)) constitute a Helicase C-terminal domain. The UVR domain maps to 631-666 (AAQMKVLEQQMYQHARDLEFEDAARIRDQIQRLREA).

This sequence belongs to the UvrB family. As to quaternary structure, forms a heterotetramer with UvrA during the search for lesions. Interacts with UvrC in an incision complex.

Its subcellular location is the cytoplasm. Its function is as follows. The UvrABC repair system catalyzes the recognition and processing of DNA lesions. A damage recognition complex composed of 2 UvrA and 2 UvrB subunits scans DNA for abnormalities. Upon binding of the UvrA(2)B(2) complex to a putative damaged site, the DNA wraps around one UvrB monomer. DNA wrap is dependent on ATP binding by UvrB and probably causes local melting of the DNA helix, facilitating insertion of UvrB beta-hairpin between the DNA strands. Then UvrB probes one DNA strand for the presence of a lesion. If a lesion is found the UvrA subunits dissociate and the UvrB-DNA preincision complex is formed. This complex is subsequently bound by UvrC and the second UvrB is released. If no lesion is found, the DNA wraps around the other UvrB subunit that will check the other stand for damage. This chain is UvrABC system protein B, found in Xylella fastidiosa (strain 9a5c).